The following is a 279-amino-acid chain: MVKLTNPPKSPKELGFDEFPSIGIIGGSGLYDPGIFENAVEVQIHTPYGLPSDNVIVGRVAGRVVAFLPRHGRGHKYPPHKIPYRANIYSLYMLGVRSIVAVSAVGSLRPDYAPGDFVVPDQFVDMTKGREYTFYDGPRTCHIQIGLEPFTQEIRQILIETAKKYNRTHDGGCYVCIEGPRFSTKAESRIWREVFGCDIIGMTLVPEINLARELGMCYGLIALVTDYDIWVPHQPVTAEAVEKMMTEKLGIIKKVIAEAVPKLPAELPKCSETLKYACV.

Residues S28, 70–71, and 103–104 contribute to the phosphate site; these read RH and SA. M202 is a substrate binding site. T203 is a binding site for phosphate. A substrate-binding site is contributed by 226–228; that stretch reads DYD.

This sequence belongs to the PNP/MTAP phosphorylase family. MTAP subfamily. As to quaternary structure, homohexamer. Dimer of a homotrimer.

It carries out the reaction S-methyl-5'-thioadenosine + phosphate = 5-(methylsulfanyl)-alpha-D-ribose 1-phosphate + adenine. The protein operates within amino-acid biosynthesis; L-methionine biosynthesis via salvage pathway; S-methyl-5-thio-alpha-D-ribose 1-phosphate from S-methyl-5'-thioadenosine (phosphorylase route): step 1/1. Functionally, catalyzes the reversible phosphorylation of S-methyl-5'-thioadenosine (MTA) to adenine and 5-methylthioribose-1-phosphate. Involved in the breakdown of MTA, a major by-product of polyamine biosynthesis. Responsible for the first step in the methionine salvage pathway after MTA has been generated from S-adenosylmethionine. Has broad substrate specificity with 6-aminopurine nucleosides as preferred substrates. This Pyrobaculum aerophilum (strain ATCC 51768 / DSM 7523 / JCM 9630 / CIP 104966 / NBRC 100827 / IM2) protein is S-methyl-5'-thioadenosine phosphorylase.